Reading from the N-terminus, the 654-residue chain is MVLSDLDIKEPDSPESGLNGSDDMVREHETESKGNLYSQYEEKVRPCIDLIDSLRALGVEQDLALPAIAVIGDQSSGKSSVLEALSGVALPRGSGIVTRCPLVLRLKKLEKEGEWKGKVSFLDREIEISDASQVEKEISEAQIAIAGEGMGISHELISLEVSSPHVPDLTLIDLPGITRVAVGNQPHDIEYQIKSLIRKYILRQETINLVVVPANVDIATTEALRMAQDVDPQGDRTIGILTKPDLVDKGTEDKVVDVVRNLVFHLKKGYMIVKCRGQQEIQHRLSLDKALQRERIFFEDHTHFRDLLEEGRATIPCLAERLTNELIMHICKTLPLLENQIKETHQRITEELQKYGKDIPEEESEKMFSLIEKIDTFNKEIISTIEGEEHVGQYDSRLFTKVRAEFCKWSAVVEKNFEKGHEAIRKEIKQFENRYRGRELPGFVNYKTFEIIIKKQVIVLEEPAVDMLHTVTDIIRNTFTEVSGKHFSEFFNLHRTAKSKIEDIRLEQENEAEKSIRLHFQMEQLVYCQDQVYRRALQQVREKEAEEEKKKKSNHYYQSEDSEPSTAEIFQHLMAYHQEVSTRISSHIPLIIQFFVLRTYGEQLKKSMLQLLQDKDQYDWLLKERTDTRDKRKFLKERLERLSRARQRLAKFPG.

Met-1 is modified (N-acetylmethionine). Basic and acidic residues-rich tracts occupy residues 1-12 (MVLSDLDIKEPD) and 23-32 (DMVREHETES). A disordered region spans residues 1 to 33 (MVLSDLDIKEPDSPESGLNGSDDMVREHETESK). In terms of domain architecture, Dynamin-type G spans 62–335 (DLALPAIAVI…LIMHICKTLP (274 aa)). Positions 72–79 (GDQSSGKS) are G1 motif. Residue 72–79 (GDQSSGKS) coordinates GTP. The tract at residues 97 to 99 (VTR) is G2 motif. Residues 173 to 176 (DLPG) are G3 motif. Residues 173-177 (DLPGI) and 242-245 (TKPD) contribute to the GTP site. The tract at residues 242-245 (TKPD) is G4 motif. Positions 274–277 (KCRG) are G5 motif. The tract at residues 336–361 (LLENQIKETHQRITEELQKYGKDIPE) is bundle signaling element (BSE). Residues 361-528 (EEESEKMFSL…HFQMEQLVYC (168 aa)) are middle domain. The segment at 362 to 624 (EESEKMFSLI…KDQYDWLLKE (263 aa)) is stalk. The disordered stretch occupies residues 544-563 (EAEEEKKKKSNHYYQSEDSE). Residues 549–552 (KKKK) are critical for lipid-binding. In terms of domain architecture, GED spans 566–654 (TAEIFQHLMA…ARQRLAKFPG (89 aa)).

Belongs to the TRAFAC class dynamin-like GTPase superfamily. Dynamin/Fzo/YdjA family. In terms of assembly, homooligomer. Oligomerizes into multimeric filamentous or ring-like structures by virtue of its stalk domain. Oligomerization is critical for GTPase activity, protein stability, and recognition of viral target structures. Interacts with TRPC1, TRPC3, TRPC4, TRPC5, TRPC6 and TRPC7. Interacts with HSPA5. Interacts with DDX39A and DDX39B. Interacts with TUBB/TUBB5. In terms of processing, ISGylated.

The protein resides in the cytoplasm. The protein localises to the endoplasmic reticulum membrane. It is found in the perinuclear region. Its function is as follows. Interferon-induced dynamin-like GTPase with antiviral activity. The protein is Interferon-induced GTP-binding protein Mx1 (MX1) of Ovis aries (Sheep).